The sequence spans 188 residues: Transcription factor FapR (188 aa).

The protein belongs to the FapR family.

Transcriptional factor involved in regulation of membrane lipid biosynthesis by repressing genes involved in fatty acid and phospholipid metabolism. This chain is Transcription factor FapR, found in Bacillus velezensis (strain DSM 23117 / BGSC 10A6 / LMG 26770 / FZB42) (Bacillus amyloliquefaciens subsp. plantarum).